Reading from the N-terminus, the 311-residue chain is Terpentetriene synthase (311 aa).

A DDXXD motif motif is present at residues 77-81; that stretch reads DDRWD.

Belongs to the terpene synthase family. Homodimer. Mg(2+) serves as cofactor.

The catalysed reaction is terpentedienyl diphosphate = terpentetriene + diphosphate. Its pathway is antibiotic biosynthesis. Functionally, involved in the production of the isoprenoid antibiotic terpentecin. Converts terpentedienol diphosphate (TDP) into terpentetriene (TTE). Can also accept geranylgeranyl diphosphate (GGDP) and farnesyl diphosphate (FDP) as substrates. This is Terpentetriene synthase (cyc2) from Kitasatospora griseola (Streptomyces griseolosporeus).